The chain runs to 232 residues: Thiamine import ATP-binding protein ThiQ (232 aa).

The 229-residue stretch at 2–230 (LKLTDITWLY…KASASALLGI (229 aa)) folds into the ABC transporter domain. 32–39 (GPSGAGKS) is a binding site for ATP.

Belongs to the ABC transporter superfamily. Thiamine importer (TC 3.A.1.19.1) family. The complex is composed of two ATP-binding proteins (ThiQ), two transmembrane proteins (ThiP) and a solute-binding protein (ThiB).

Its subcellular location is the cell inner membrane. The enzyme catalyses thiamine(out) + ATP + H2O = thiamine(in) + ADP + phosphate + H(+). Its function is as follows. Part of the ABC transporter complex ThiBPQ involved in thiamine import. Responsible for energy coupling to the transport system. The sequence is that of Thiamine import ATP-binding protein ThiQ from Escherichia coli (strain K12).